The chain runs to 1253 residues: Methionine synthase (1253 aa).

One can recognise a Hcy-binding domain in the interval 6–326; it reads QDEIEAILRK…DHIREIAEAV (321 aa). 3 residues coordinate Zn(2+): C248, C311, and C312. One can recognise a Pterin-binding domain in the interval 359–620; the sequence is FVNIGERCNV…IHKDLLQLCE (262 aa). (6S)-5,6,7,8-tetrahydrofolate contacts are provided by residues 370 to 372, D437, N458, D525, N567, R573, and R579; that span reads GSK. In terms of domain architecture, B12-binding N-terminal spans 650–747; the sequence is QTDEWRNGSI…FMEKEREEAR (98 aa). Methylcob(III)alamin is bound by residues E697, 770 to 774, H773, S818, T822, and A874; that span reads GDVHD. The 136-residue stretch at 760 to 895 folds into the B12-binding domain; it reads QGTIVLATVK…DENLKDDYFE (136 aa). Residues 911 to 1253 enclose the AdoMet activation domain; the sequence is SLKERKYLPL…LGPILGYDTD (343 aa). Residues D962, R1160, and 1215–1216 each bind S-adenosyl-L-methionine; that span reads YF. The residue at position 1252 (T1252) is a Phosphothreonine.

It belongs to the vitamin-B12 dependent methionine synthase family. In terms of assembly, monomer. Dimer. Forms a multiprotein complex with MMACHC, MMADHC and MTRR. The cofactor is methylcob(III)alamin. Zn(2+) is required as a cofactor.

It is found in the cytoplasm. The catalysed reaction is (6S)-5-methyl-5,6,7,8-tetrahydrofolate + L-homocysteine = (6S)-5,6,7,8-tetrahydrofolate + L-methionine. It functions in the pathway amino-acid biosynthesis; L-methionine biosynthesis via de novo pathway; L-methionine from L-homocysteine (MetH route): step 1/1. Catalyzes the transfer of a methyl group from methylcob(III)alamin (MeCbl) to homocysteine, yielding enzyme-bound cob(I)alamin and methionine in the cytosol. MeCbl is an active form of cobalamin (vitamin B12) used as a cofactor for methionine biosynthesis. Cob(I)alamin form is regenerated to MeCbl by a transfer of a methyl group from 5-methyltetrahydrofolate. The processing of cobalamin in the cytosol occurs in a multiprotein complex composed of at least MMACHC, MMADHC, MTRR (methionine synthase reductase) and MTR which may contribute to shuttle safely and efficiently cobalamin towards MTR in order to produce methionine. The sequence is that of Methionine synthase (Mtr) from Rattus norvegicus (Rat).